A 185-amino-acid chain; its full sequence is ATP synthase subunit delta, chloroplastic (185 aa).

This sequence belongs to the ATPase delta chain family. As to quaternary structure, F-type ATPases have 2 components, F(1) - the catalytic core - and F(0) - the membrane proton channel. F(1) has five subunits: alpha(3), beta(3), gamma(1), delta(1), epsilon(1). CF(0) has four main subunits: a(1), b(1), b'(1) and c(10-14). The alpha and beta chains form an alternating ring which encloses part of the gamma chain. F(1) is attached to F(0) by a central stalk formed by the gamma and epsilon chains, while a peripheral stalk is formed by the delta, b and b' chains.

The protein localises to the plastid. It localises to the chloroplast thylakoid membrane. Functionally, f(1)F(0) ATP synthase produces ATP from ADP in the presence of a proton or sodium gradient. F-type ATPases consist of two structural domains, F(1) containing the extramembraneous catalytic core and F(0) containing the membrane proton channel, linked together by a central stalk and a peripheral stalk. During catalysis, ATP synthesis in the catalytic domain of F(1) is coupled via a rotary mechanism of the central stalk subunits to proton translocation. Its function is as follows. This protein is part of the stalk that links CF(0) to CF(1). It either transmits conformational changes from CF(0) to CF(1) or is implicated in proton conduction. The polypeptide is ATP synthase subunit delta, chloroplastic (Guillardia theta (Cryptophyte)).